The sequence spans 393 residues: Mitogen-activated protein kinase 10 (393 aa).

Positions 60-345 (KPPIRPIGRG…VKEALAHPYL (286 aa)) constitute a Protein kinase domain. ATP-binding positions include 66 to 74 (IGRGACGIV) and lysine 89. The active-site Proton acceptor is the aspartate 186. Threonine 218 is subject to Phosphothreonine. Residues 218–220 (TEY) carry the TXY motif. Tyrosine 220 carries the phosphotyrosine modification. At threonine 223 the chain carries Phosphothreonine.

Belongs to the protein kinase superfamily. CMGC Ser/Thr protein kinase family. MAP kinase subfamily. In terms of assembly, interacts with MKK2. In terms of processing, dually phosphorylated on Thr-218 and Tyr-220, which activates the enzyme.

It catalyses the reaction L-seryl-[protein] + ATP = O-phospho-L-seryl-[protein] + ADP + H(+). The catalysed reaction is L-threonyl-[protein] + ATP = O-phospho-L-threonyl-[protein] + ADP + H(+). Its activity is regulated as follows. Activated by threonine and tyrosine phosphorylation. This is Mitogen-activated protein kinase 10 (MPK10) from Arabidopsis thaliana (Mouse-ear cress).